We begin with the raw amino-acid sequence, 167 residues long: Phospholipase A2 (167 aa).

Positions 38, 40, and 42 each coordinate Ca(2+). Disulfide bonds link C39–C61, C60–C99, C67–C92, C90–C127, and C132–C144. Residue N47 is glycosylated (N-linked (GlcNAc...) asparagine). Residue H64 is part of the active site. Position 65 (D65) interacts with Ca(2+). Residues 136–140 (ARSAR) constitute a propeptide that is removed on maturation.

Belongs to the phospholipase A2 family. Group III subfamily. Heterodimer composed of a large subunit and a small subunit; disulfide-linked. Ca(2+) is required as a cofactor. Expressed by the venom gland.

It is found in the secreted. It catalyses the reaction a 1,2-diacyl-sn-glycero-3-phosphocholine + H2O = a 1-acyl-sn-glycero-3-phosphocholine + a fatty acid + H(+). In terms of biological role, phospholipase toxin, which catalyzes the calcium-dependent hydrolysis of the 2-acyl groups in 3-sn-phosphoglycerides. Inhibits both skeletal (RYR1) and cardiac (RYR2) ryanodine receptors (calcium release channels). Probably blocks ryanodine receptors by generating a lipid product. Shows hemolytic activity, but it is not know if it is direct or indirect. In Hottentotta tamulus (Eastern Indian scorpion), this protein is Phospholipase A2.